The following is a 185-amino-acid chain: MRHKLMTSTIASLMFVAAAAVAADPTPVSVVGGTIHFEGKLVNAACAVSTKSADQTVTLGQYRTASFTAIGNTTAQVPFSIVLNDCDPKVAATAAVAFSGQADNTTPNLLAVSSADNSTTATGVGIEILDNTSSPLKPDGATFSAKQSLVEGTNTLRFTARYKATAAATTPGQANADATFIMKYE.

Positions 1-22 (MRHKLMTSTIASLMFVAAAAVA) are cleaved as a signal peptide. A disulfide bridge connects residues C46 and C86.

The protein belongs to the fimbrial protein family.

The protein resides in the fimbrium. The chain is Fimbrial subunit type 1 from Salmonella typhimurium.